The chain runs to 715 residues: DNA ligase (715 aa).

NAD(+) contacts are provided by residues 47–51, 96–97, and Glu-129; these read DADYD and SL. Lys-131 acts as the N6-AMP-lysine intermediate in catalysis. 4 residues coordinate NAD(+): Arg-152, Glu-189, Lys-306, and Lys-330. Zn(2+)-binding residues include Cys-435, Cys-438, Cys-453, and Cys-459. The BRCT domain occupies 637–715; it reads KRDSAVAGKT…EDEWLALIQG (79 aa).

This sequence belongs to the NAD-dependent DNA ligase family. LigA subfamily. Mg(2+) serves as cofactor. It depends on Mn(2+) as a cofactor.

The enzyme catalyses NAD(+) + (deoxyribonucleotide)n-3'-hydroxyl + 5'-phospho-(deoxyribonucleotide)m = (deoxyribonucleotide)n+m + AMP + beta-nicotinamide D-nucleotide.. In terms of biological role, DNA ligase that catalyzes the formation of phosphodiester linkages between 5'-phosphoryl and 3'-hydroxyl groups in double-stranded DNA using NAD as a coenzyme and as the energy source for the reaction. It is essential for DNA replication and repair of damaged DNA. This chain is DNA ligase, found in Rhodopseudomonas palustris (strain BisA53).